The chain runs to 920 residues: Isoleucine--tRNA ligase (920 aa).

A 'HIGH' region motif is present at residues 58 to 68; it reads PYANGHLHLGH. Glu569 lines the L-isoleucyl-5'-AMP pocket. Positions 610 to 614 match the 'KMSKS' region motif; the sequence is KMSKS. Residue Lys613 participates in ATP binding. Residues Cys895, Cys898, Cys910, and Cys913 each coordinate Zn(2+).

It belongs to the class-I aminoacyl-tRNA synthetase family. IleS type 1 subfamily. Monomer. Zn(2+) serves as cofactor.

The protein resides in the cytoplasm. The enzyme catalyses tRNA(Ile) + L-isoleucine + ATP = L-isoleucyl-tRNA(Ile) + AMP + diphosphate. In terms of biological role, catalyzes the attachment of isoleucine to tRNA(Ile). As IleRS can inadvertently accommodate and process structurally similar amino acids such as valine, to avoid such errors it has two additional distinct tRNA(Ile)-dependent editing activities. One activity is designated as 'pretransfer' editing and involves the hydrolysis of activated Val-AMP. The other activity is designated 'posttransfer' editing and involves deacylation of mischarged Val-tRNA(Ile). The sequence is that of Isoleucine--tRNA ligase from Helicobacter pylori (strain Shi470).